The chain runs to 377 residues: Phosphoserine aminotransferase (377 aa).

Arg43 provides a ligand contact to L-glutamate. Pyridoxal 5'-phosphate-binding residues include Trp105, Thr164, Asp189, and Gln212. An N6-(pyridoxal phosphate)lysine modification is found at Lys213. 254–255 (NT) contributes to the pyridoxal 5'-phosphate binding site.

Belongs to the class-V pyridoxal-phosphate-dependent aminotransferase family. SerC subfamily. Homodimer. It depends on pyridoxal 5'-phosphate as a cofactor.

The protein localises to the cytoplasm. The enzyme catalyses O-phospho-L-serine + 2-oxoglutarate = 3-phosphooxypyruvate + L-glutamate. The catalysed reaction is 4-(phosphooxy)-L-threonine + 2-oxoglutarate = (R)-3-hydroxy-2-oxo-4-phosphooxybutanoate + L-glutamate. The protein operates within amino-acid biosynthesis; L-serine biosynthesis; L-serine from 3-phospho-D-glycerate: step 2/3. It functions in the pathway cofactor biosynthesis; pyridoxine 5'-phosphate biosynthesis; pyridoxine 5'-phosphate from D-erythrose 4-phosphate: step 3/5. Catalyzes the reversible conversion of 3-phosphohydroxypyruvate to phosphoserine and of 3-hydroxy-2-oxo-4-phosphonooxybutanoate to phosphohydroxythreonine. This is Phosphoserine aminotransferase from Bordetella bronchiseptica (strain ATCC BAA-588 / NCTC 13252 / RB50) (Alcaligenes bronchisepticus).